A 911-amino-acid chain; its full sequence is Nitrate reductase [NADH], clone PBNBR1405 (911 aa).

The segment at 1-68 is disordered; sequence MATSVDNRHY…RFDSSDDEDE (68 aa). Basic and acidic residues predominate over residues 49–62; the sequence is KSVDKTTKEDRFDS. Cys191 is a Mo-molybdopterin binding site. One can recognise a Cytochrome b5 heme-binding domain in the interval 539 to 614; the sequence is SKMYSMSEVR…LEDYRIGELI (76 aa). 2 residues coordinate heme: His574 and His597. The region spanning 654 to 766 is the FAD-binding FR-type domain; that stretch reads REKVPVKLIE…KGPLGHIEYQ (113 aa). Residues 706–709, 723–727, Phe728, Phe735, 740–742, and Thr793 each bind FAD; these read RAYT, VIKVY, and LMS.

The protein belongs to the nitrate reductase family. As to quaternary structure, homodimer. The cofactor is FAD. Requires heme as cofactor. It depends on Mo-molybdopterin as a cofactor.

The catalysed reaction is nitrite + NAD(+) + H2O = nitrate + NADH + H(+). Nitrate reductase is a key enzyme involved in the first step of nitrate assimilation in plants, fungi and bacteria. This is Nitrate reductase [NADH], clone PBNBR1405 (NIA1) from Brassica napus (Rape).